We begin with the raw amino-acid sequence, 98 residues long: MKQSLILAVLCLALVFATIEAKPKADPNIIVGGCIKCHVKNASGRCVRIVGCGVDKVPDLFSDPNIIVGGCSKCHKQDSSGNCVRIAGCGVDPVRDAE.

The N-terminal stretch at Met1–Ala21 is a signal peptide. Residues Lys22 to Pro27 constitute a propeptide that is removed on maturation. 2 disulfides stabilise this stretch: Cys34–Cys46 and Cys37–Cys52. 2 propeptides span residues Asp63 to Pro64 and Asp92 to Glu98.

It belongs to the sea anemone BBH family.

Its subcellular location is the secreted. The protein localises to the nematocyst. Acts as a positive modulator of mammalian TRPA1, a non-selective cation channel involved in detection of pain, in vitro yet has an analgesic and anti-inflammatory effect in vivo. This Metridium senile (Brown sea anemone) protein is Peptides MS9.1.